The sequence spans 277 residues: Serine protease 33 (277 aa).

Positions M1–A24 are cleaved as a signal peptide. The 243-residue stretch at I34 to S276 folds into the Peptidase S1 domain. Residues C59 and C75 are joined by a disulfide bond. Catalysis depends on charge relay system residues H74 and D123. 3 disulfides stabilise this stretch: C157-C234, C190-C213, and C224-C252. Residue S228 is the Charge relay system of the active site.

It belongs to the peptidase S1 family. Post-translationally, not glycosylated. As to expression, widely expressed.

The protein resides in the secreted. In terms of biological role, serine protease that has amidolytic activity, cleaving its substrates before Arg residues. The sequence is that of Serine protease 33 (Prss33) from Mus musculus (Mouse).